We begin with the raw amino-acid sequence, 611 residues long: Threonine--tRNA ligase (611 aa).

Positions 209–502 (DHRRLGKDLE…MTENYAGDFP (294 aa)) are catalytic. Zn(2+)-binding residues include Cys-302, His-353, and His-479.

Belongs to the class-II aminoacyl-tRNA synthetase family. In terms of assembly, homodimer. Requires Zn(2+) as cofactor.

Its subcellular location is the cytoplasm. It catalyses the reaction tRNA(Thr) + L-threonine + ATP = L-threonyl-tRNA(Thr) + AMP + diphosphate + H(+). Its function is as follows. Catalyzes the attachment of threonine to tRNA(Thr) in a two-step reaction: L-threonine is first activated by ATP to form Thr-AMP and then transferred to the acceptor end of tRNA(Thr). Also edits incorrectly charged L-seryl-tRNA(Thr). The protein is Threonine--tRNA ligase of Synechococcus sp. (strain CC9902).